The sequence spans 433 residues: Trigger factor (433 aa).

Residues 161 to 246 (NDRVIIDFVG…LNKVENMILP (86 aa)) form the PPIase FKBP-type domain.

It belongs to the FKBP-type PPIase family. Tig subfamily.

It is found in the cytoplasm. It carries out the reaction [protein]-peptidylproline (omega=180) = [protein]-peptidylproline (omega=0). In terms of biological role, involved in protein export. Acts as a chaperone by maintaining the newly synthesized protein in an open conformation. Functions as a peptidyl-prolyl cis-trans isomerase. This Haemophilus ducreyi (strain 35000HP / ATCC 700724) protein is Trigger factor.